Here is a 460-residue protein sequence, read N- to C-terminus: MANIARDIFKAYDIRGIVGKTLTDDAAYLIGRAIAAKAAEKGMTRIALGRDGRLSGPELMEHIQRGFTDSGIGVLNVGMVATPMLYFAAINECGGSGVMITGSHNPPDYNGFKMMLGGDTLAGEAIQELLAIVEKDGFVAADKQGNVTEKDISGEYHNHIVGHIKLKRPMKIAIDAGNGVGGAFAGKLYKGLGNEVTELFCDVDGTFPNHHPDPSKPKNLQDLIAALKNGDAEIGLAFDGDADRLGVVTKDGNIIYPDRQLMLFAQDVLNRNPGAKVIFDVKSTRLLAPWIKEHGGEAIMEKTGHSFIKSAMKKTGALVAGEMSGHIFFKERWFGFDDGLYAGARLLEILSASDNPSEVLNNLPQSISTPELNIALPEGSNGHQVIDELAAKAEFEGATEIITIDGLRVEFPDGFGLMRASNTTPILVLRFEADTQAAIERIQNQFKAVIESNPNLIWPL.

The Phosphoserine intermediate role is filled by S103. S103 contacts Mg(2+). Residues 103–104 (SH) and K113 each bind substrate. Residues D239, D241, and D243 each contribute to the Mg(2+) site. Substrate-binding positions include 243-244 (DR), T303, and 322-324 (EMS).

Belongs to the phosphohexose mutase family. Mg(2+) is required as a cofactor.

It localises to the cytoplasm. The catalysed reaction is alpha-D-glucose 1-phosphate = alpha-D-glucose 6-phosphate. Its function is as follows. This enzyme participates in both the breakdown and synthesis of glucose. This is Phosphoglucomutase (pgm) from Neisseria meningitidis serogroup A / serotype 4A (strain DSM 15465 / Z2491).